Consider the following 445-residue polypeptide: Membrane protein insertase YidC (445 aa).

Transmembrane regions (helical) follow at residues Val6–Val26, Phe248–His268, Ala313–Ile333, Leu352–Tyr372, and Gly388–Leu408.

This sequence belongs to the OXA1/ALB3/YidC family. Type 1 subfamily. Interacts with the Sec translocase complex via SecD. Specifically interacts with transmembrane segments of nascent integral membrane proteins during membrane integration.

Its subcellular location is the cell inner membrane. Its function is as follows. Required for the insertion and/or proper folding and/or complex formation of integral membrane proteins into the membrane. Involved in integration of membrane proteins that insert both dependently and independently of the Sec translocase complex, as well as at least some lipoproteins. Aids folding of multispanning membrane proteins. This Thermotoga maritima (strain ATCC 43589 / DSM 3109 / JCM 10099 / NBRC 100826 / MSB8) protein is Membrane protein insertase YidC.